The primary structure comprises 395 residues: G-protein coupled receptor 182 (395 aa).

Over Met-1–Phe-53 the chain is Extracellular. N-linked (GlcNAc...) asparagine glycans are attached at residues Asn-24 and Asn-33. Residues Val-54–Cys-75 form a helical membrane-spanning segment. Topologically, residues Arg-76–Leu-86 are cytoplasmic. The helical transmembrane segment at Tyr-87–Val-109 threads the bilayer. The Extracellular portion of the chain corresponds to Met-110 to Arg-123. Cys-122 and Cys-198 are oxidised to a cystine. The chain crosses the membrane as a helical span at residues Phe-124–Ile-145. Topologically, residues Asp-146–Arg-166 are cytoplasmic. The helical transmembrane segment at Arg-167–Gln-189 threads the bilayer. At Leu-190–Ala-213 the chain is on the extracellular side. Residues Val-214–Ile-235 form a helical membrane-spanning segment. Over Leu-236–Leu-254 the chain is Cytoplasmic. The helical transmembrane segment at Leu-255–Leu-276 threads the bilayer. At Leu-277–Tyr-295 the chain is on the extracellular side. A helical transmembrane segment spans residues Phe-296 to Tyr-316. Residues Asn-317 to Leu-395 lie on the Cytoplasmic side of the membrane. Ser-329 bears the Phosphoserine mark.

Belongs to the G-protein coupled receptor 1 family. Expressed in liver and lung.

Its subcellular location is the cell membrane. In terms of biological role, orphan receptor. The sequence is that of G-protein coupled receptor 182 (Gpr182) from Mus musculus (Mouse).